We begin with the raw amino-acid sequence, 312 residues long: Gamma-soluble NSF attachment protein (312 aa).

Positions 281 to 312 (KKKAAAPPQAKPEGTAAPAAEEEEDEYAGGLC) are disordered. A compositionally biased stretch (low complexity) spans 285–299 (AAPPQAKPEGTAAPA). A compositionally biased stretch (acidic residues) spans 300–312 (AEEEEDEYAGGLC).

Belongs to the SNAP family. As to quaternary structure, interacts with RAB11FIP5. Interacts with VTI1A.

It localises to the membrane. Its subcellular location is the golgi apparatus. In terms of biological role, required for vesicular transport between the endoplasmic reticulum and the Golgi apparatus. This is Gamma-soluble NSF attachment protein from Bos taurus (Bovine).